Here is a 525-residue protein sequence, read N- to C-terminus: GMP synthase [glutamine-hydrolyzing] (525 aa).

A Glutamine amidotransferase type-1 domain is found at 12–206 (RILIIDFGSQ…THGICGCGGD (195 aa)). Residue Cys-90 is the Nucleophile of the active site. Catalysis depends on residues His-180 and Glu-182. Positions 207-399 (WTMAAFKDQA…LGLPDEMVGR (193 aa)) constitute a GMPS ATP-PPase domain. Position 234–240 (234–240 (SGGVDSS)) interacts with ATP.

As to quaternary structure, homodimer.

It carries out the reaction XMP + L-glutamine + ATP + H2O = GMP + L-glutamate + AMP + diphosphate + 2 H(+). Its pathway is purine metabolism; GMP biosynthesis; GMP from XMP (L-Gln route): step 1/1. In terms of biological role, catalyzes the synthesis of GMP from XMP. This chain is GMP synthase [glutamine-hydrolyzing], found in Rhodospirillum rubrum (strain ATCC 11170 / ATH 1.1.1 / DSM 467 / LMG 4362 / NCIMB 8255 / S1).